We begin with the raw amino-acid sequence, 615 residues long: uncharacterized protein (615 aa).

D403 serves as the catalytic Proton acceptor. Residue E406 is the Proton donor of the active site.

The protein belongs to the glycosyl hydrolase 15 family.

This is an uncharacterized protein from Methanocaldococcus jannaschii (strain ATCC 43067 / DSM 2661 / JAL-1 / JCM 10045 / NBRC 100440) (Methanococcus jannaschii).